Consider the following 245-residue polypeptide: UPF0246 protein cgR_1824 (245 aa).

The protein belongs to the UPF0246 family.

The sequence is that of UPF0246 protein cgR_1824 from Corynebacterium glutamicum (strain R).